A 463-amino-acid polypeptide reads, in one-letter code: Na(+)/H(+) antiporter NhaA 3 (463 aa).

The next 11 membrane-spanning stretches (helical) occupy residues 28 to 48 (FLAT…AALL), 79 to 99 (LHHW…GLEI), 114 to 134 (IAVP…IYFV), 144 to 164 (GWGI…ALFG), 173 to 193 (LFLL…VGIF), 196 to 216 (DHLN…ILGL), 232 to 252 (LVLW…GVLV), 305 to 325 (VLHP…NAGV), 344 to 364 (VAAA…VAAI), 377 to 397 (YGHL…SLFI), and 413 to 433 (IGIL…LRVL). Positions 444–463 (TDEPVPRLPPRPWRAPVPAK) are disordered. Residues 449–463 (PRLPPRPWRAPVPAK) are compositionally biased toward pro residues.

This sequence belongs to the NhaA Na(+)/H(+) (TC 2.A.33) antiporter family.

The protein resides in the cell membrane. The catalysed reaction is Na(+)(in) + 2 H(+)(out) = Na(+)(out) + 2 H(+)(in). Functionally, na(+)/H(+) antiporter that extrudes sodium in exchange for external protons. The protein is Na(+)/H(+) antiporter NhaA 3 of Frankia alni (strain DSM 45986 / CECT 9034 / ACN14a).